Consider the following 214-residue polypeptide: GTP-binding nuclear protein GSP1 (214 aa).

Residues 4-172 enclose the Small GTPase Ran-type domain; the sequence is RELTYKICLI…LHLARIFTGR (169 aa). 17–22 provides a ligand contact to GTP; sequence GVGKTT. The switch-I stretch occupies residues 34 to 42; sequence KNYNATVGA. Residues glycine 66, 121 to 124, and 151 to 153 contribute to the GTP site; these read NKID and SAK. The tract at residues 66-82 is switch-II; the sequence is GQEKKAVLKDVYYIGAS.

This sequence belongs to the small GTPase superfamily. Ran family. Found in a nuclear export complex with RanGTP, exportin and pre-miRNA.

It is found in the nucleus. GTP-binding protein involved in nucleocytoplasmic transport. Required for the import of protein into the nucleus and also for RNA export. This is GTP-binding nuclear protein GSP1 (GSP1) from Encephalitozoon cuniculi (strain GB-M1) (Microsporidian parasite).